Consider the following 450-residue polypeptide: UPF0236 protein in vanSb 3'region (450 aa).

This sequence belongs to the UPF0236 family.

This chain is UPF0236 protein in vanSb 3'region, found in Streptococcus gallolyticus (Streptococcus bovis biotype I).